An 89-amino-acid chain; its full sequence is Small ribosomal subunit protein uS15 (89 aa).

This sequence belongs to the universal ribosomal protein uS15 family. Part of the 30S ribosomal subunit. Forms a bridge to the 50S subunit in the 70S ribosome, contacting the 23S rRNA.

Functionally, one of the primary rRNA binding proteins, it binds directly to 16S rRNA where it helps nucleate assembly of the platform of the 30S subunit by binding and bridging several RNA helices of the 16S rRNA. In terms of biological role, forms an intersubunit bridge (bridge B4) with the 23S rRNA of the 50S subunit in the ribosome. The chain is Small ribosomal subunit protein uS15 from Protochlamydia amoebophila (strain UWE25).